We begin with the raw amino-acid sequence, 425 residues long: Exodeoxyribonuclease 7 large subunit (425 aa).

Belongs to the XseA family. As to quaternary structure, heterooligomer composed of large and small subunits.

The protein localises to the cytoplasm. It catalyses the reaction Exonucleolytic cleavage in either 5'- to 3'- or 3'- to 5'-direction to yield nucleoside 5'-phosphates.. In terms of biological role, bidirectionally degrades single-stranded DNA into large acid-insoluble oligonucleotides, which are then degraded further into small acid-soluble oligonucleotides. The protein is Exodeoxyribonuclease 7 large subunit of Nocardia farcinica (strain IFM 10152).